The following is a 1578-amino-acid chain: FERM and PDZ domain-containing protein 1 (1578 aa).

The PDZ domain maps to 57–135 (TVKIDKDTLL…SLSITVVRCT (79 aa)). The FERM domain occupies 181-496 (NVLKLYLENG…GYYRLLVDPV (316 aa)). 3 disordered regions span residues 555-616 (KEEQ…EEDD), 720-743 (SDSSESTASRQGGAPPAWGQQGWT), and 759-831 (PLAF…VKKY). Residues 720–729 (SDSSESTASR) show a composition bias toward polar residues. The span at 730-742 (QGGAPPAWGQQGW) shows a compositional bias: low complexity. Positions 793–811 (AEPSATSLQNKASTSSPEN) are enriched in polar residues. Over residues 822–831 (PSRRGGVKKY) the composition is skewed to basic residues. The segment at 924–931 (EPETMETK) is important for interaction with GPSM2. 3 disordered regions span residues 950–1030 (PNNK…LASN), 1070–1194 (KYTE…QGCQ), and 1347–1374 (PQPETEEEDRDLEAHPMAPLTSPPSAGS). The span at 968–986 (TPHCSNPGSSGPDTAQARP) shows a compositional bias: polar residues. Basic and acidic residues predominate over residues 1100–1117 (TKEEPQGQLSLERDREVT). Polar residues predominate over residues 1139 to 1150 (DVSNNVSQTLDI).

As to quaternary structure, interacts with GPSM1. Interacts with GPSM2 (via TPR repeat region).

Its subcellular location is the cytoplasm. The protein resides in the cytosol. It is found in the cell membrane. Its function is as follows. Stabilizes membrane-bound GPSM1, and thereby promotes its interaction with GNAI1. This chain is FERM and PDZ domain-containing protein 1 (FRMPD1), found in Homo sapiens (Human).